Reading from the N-terminus, the 903-residue chain is Calcium-activated chloride channel regulator 1 (903 aa).

The N-terminal stretch at 1–21 is a signal peptide; that stretch reads MVPRLTVILFLTLHLLPGMKS. Residues 45 to 199 are metalloprotease domain; that stretch reads DEKLIQNIKE…HITGTNVIVK (155 aa). His-155 contributes to the Zn(2+) binding site. Residue Glu-156 is part of the active site. Zn(2+) contacts are provided by His-159 and Asp-166. One can recognise a VWFA domain in the interval 308-476; that stretch reads VVCLVLDKSG…NGLTNAFSRI (169 aa). 4 N-linked (GlcNAc...) asparagine glycosylation sites follow: Asn-360, Asn-372, Asn-504, and Asn-842. A helical transmembrane segment spans residues 883–903; that stretch reads GTKISAINLAIFALAMILSIV.

Belongs to the CLCR family. In terms of processing, glycosylated. Post-translationally, the 125-kDa product is autoproteolytically processed by the metalloprotease domain and yields to two cell-surface-associated subunits, a 90-kDa protein and a group of 37- to 41-kDa proteins. The cleavage is necessary for calcium-activated chloride channel (CaCC) activation activity. As to expression, trachea.

It is found in the apical cell membrane. May be involved in mediating calcium-activated chloride conductance. May play critical roles in goblet cell metaplasia, mucus hypersecretion, cystic fibrosis and AHR. May be involved in the regulation of mucus production and/or secretion by goblet cells. Involved in the regulation of tissue inflammation in the innate immune response. May play a role as a tumor suppressor. Induces MUC5AC. The protein is Calcium-activated chloride channel regulator 1 of Bos taurus (Bovine).